The primary structure comprises 272 residues: HMP-PP phosphatase (272 aa).

Aspartate 8 (nucleophile) is an active-site residue. 3 residues coordinate Mg(2+): aspartate 8, aspartate 10, and aspartate 212.

It belongs to the HAD-like hydrolase superfamily. Cof family. The cofactor is Mg(2+).

The catalysed reaction is 4-amino-2-methyl-5-(diphosphooxymethyl)pyrimidine + H2O = 4-amino-2-methyl-5-(phosphooxymethyl)pyrimidine + phosphate + H(+). Functionally, catalyzes the hydrolysis of 4-amino-2-methyl-5-hydroxymethylpyrimidine pyrophosphate (HMP-PP) to 4-amino-2-methyl-5-hydroxymethylpyrimidine phosphate (HMP-P). The chain is HMP-PP phosphatase from Salmonella newport (strain SL254).